A 337-amino-acid polypeptide reads, in one-letter code: Transaldolase (337 aa).

Residues 1–10 carry the Nuclear localization signal motif; it reads MSGSPVKRQR. At Lys-115 the chain carries N6-acetyllysine. Lys-142 functions as the Schiff-base intermediate with substrate in the catalytic mechanism. Lys-219 carries the N6-acetyllysine modification. 2 positions are modified to phosphoserine: Ser-237 and Ser-256. An N6-acetyllysine mark is found at Lys-269, Lys-286, and Lys-321.

Belongs to the transaldolase family. Type 1 subfamily. In terms of assembly, homodimer. Interacts with KPNA1 and KPNA4.

Its subcellular location is the nucleus. The protein localises to the cytoplasm. The catalysed reaction is D-sedoheptulose 7-phosphate + D-glyceraldehyde 3-phosphate = D-erythrose 4-phosphate + beta-D-fructose 6-phosphate. It functions in the pathway carbohydrate degradation; pentose phosphate pathway; D-glyceraldehyde 3-phosphate and beta-D-fructose 6-phosphate from D-ribose 5-phosphate and D-xylulose 5-phosphate (non-oxidative stage): step 2/3. Its function is as follows. Catalyzes the rate-limiting step of the non-oxidative phase in the pentose phosphate pathway. Catalyzes the reversible conversion of sedheptulose-7-phosphate and D-glyceraldehyde 3-phosphate into erythrose-4-phosphate and beta-D-fructose 6-phosphate. In Cricetulus griseus (Chinese hamster), this protein is Transaldolase (TALDO1).